The primary structure comprises 398 residues: tRNA-specific 2-thiouridylase MnmA (398 aa).

ATP contacts are provided by residues 20–27 (AMSGGVDS) and Leu-46. The Nucleophile role is filled by Cys-114. Cysteines 114 and 210 form a disulfide. Gly-138 is an ATP binding site. Positions 160–162 (RDQ) are interaction with tRNA. The active-site Cysteine persulfide intermediate is the Cys-210.

Belongs to the MnmA/TRMU family.

Its subcellular location is the cytoplasm. It catalyses the reaction S-sulfanyl-L-cysteinyl-[protein] + uridine(34) in tRNA + AH2 + ATP = 2-thiouridine(34) in tRNA + L-cysteinyl-[protein] + A + AMP + diphosphate + H(+). Catalyzes the 2-thiolation of uridine at the wobble position (U34) of tRNA, leading to the formation of s(2)U34. The sequence is that of tRNA-specific 2-thiouridylase MnmA from Brucella canis (strain ATCC 23365 / NCTC 10854 / RM-666).